Reading from the N-terminus, the 201-residue chain is dTTP/UTP pyrophosphatase (201 aa).

Asp-73 functions as the Proton acceptor in the catalytic mechanism.

It belongs to the Maf family. YhdE subfamily. A divalent metal cation is required as a cofactor.

Its subcellular location is the cytoplasm. It carries out the reaction dTTP + H2O = dTMP + diphosphate + H(+). The enzyme catalyses UTP + H2O = UMP + diphosphate + H(+). In terms of biological role, nucleoside triphosphate pyrophosphatase that hydrolyzes dTTP and UTP. May have a dual role in cell division arrest and in preventing the incorporation of modified nucleotides into cellular nucleic acids. This Pseudomonas aeruginosa (strain ATCC 15692 / DSM 22644 / CIP 104116 / JCM 14847 / LMG 12228 / 1C / PRS 101 / PAO1) protein is dTTP/UTP pyrophosphatase.